The following is a 388-amino-acid chain: DNA primase small subunit PriS (388 aa).

Catalysis depends on residues D100, D102, and D288.

Belongs to the eukaryotic-type primase small subunit family. Heterodimer of a small subunit (PriS) and a large subunit (PriL). Mg(2+) serves as cofactor. Mn(2+) is required as a cofactor.

Catalytic subunit of DNA primase, an RNA polymerase that catalyzes the synthesis of short RNA molecules used as primers for DNA polymerase during DNA replication. The small subunit contains the primase catalytic core and has DNA synthesis activity on its own. Binding to the large subunit stabilizes and modulates the activity, increasing the rate of DNA synthesis while decreasing the length of the DNA fragments, and conferring RNA synthesis capability. The DNA polymerase activity may enable DNA primase to also catalyze primer extension after primer synthesis. May also play a role in DNA repair. The protein is DNA primase small subunit PriS of Methanospirillum hungatei JF-1 (strain ATCC 27890 / DSM 864 / NBRC 100397 / JF-1).